The sequence spans 150 residues: DNA-directed RNA polymerases I, II, and III subunit RPABC3 (150 aa).

Ala-2 carries the N-acetylalanine modification.

The protein belongs to the eukaryotic RPB8 RNA polymerase subunit family. In terms of assembly, component of the RNA polymerase I (Pol I), RNA polymerase II (Pol II) and RNA polymerase III (Pol III) complexes consisting of at least 13, 12 and 17 subunits, respectively. Pol I complex consists of a ten-subunit catalytic core composed of POLR1A/RPA1, POLR1B/RPA2, POLR1C/RPAC1, POLR1D/RPAC2, POLR1H/RPA12, POLR2E/RPABC1, POLR2F/RPABC2, POLR2H/RPABC3, POLR2K/RPABC4 and POLR2L/RPABC5; a mobile stalk subunit POLR1F/RPA43 protruding from the core and additional subunits homologous to general transcription factors POLR1E/RPA49 and POLR1G/RPA34. Part of Pol I pre-initiation complex (PIC), in which Pol I core assembles with RRN3 and promoter-bound UTBF and SL1/TIF-IB complex. Pol II complex contains a ten-subunit catalytic core composed of POLR2A/RPB1, POLR2B/RPB2, POLR2C/RPB3, POLR2I/RPB9, POLR2J/RPB11, POLR2E/RPABC1, POLR2F/RPABC2, POLR2H/RPABC3, POLR2K/RPABC4 and POLR2L/RPABC5 and a mobile stalk composed of two subunits POLR2D/RPB4 and POLR2G/RPB7. Part of Pol II(G) complex, in which Pol II core associates with an additional subunit POLR2M; unlike conventional Pol II, Pol II(G) functions as a transcriptional repressor. Part of Pol II pre-initiation complex (PIC), in which Pol II core assembles with Mediator, general transcription factors and other specific initiation factors including GTF2E1, GTF2E2, GTF2F1, GTF2F2, TCEA1, ERCC2, ERCC3, GTF2H2, GTF2H3, GTF2H4, GTF2H5, GTF2A1, GTF2A2, GTF2B and TBP; this large multi-subunit PIC complex mediates DNA unwinding and targets Pol II core to the transcription start site where the first phosphodiester bond forms. Directly interacts with POLR2A. Pol III complex consists of a ten-subunit catalytic core composed of POLR3A/RPC1, POLR3B/RPC2, POLR1C/RPAC1, POLR1D/RPAC2, POLR3K/RPC10, POLR2E/RPABC1, POLR2F/RPABC2, POLR2H/RPABC3, POLR2K/RPABC4 and POLR2L/RPABC5; a mobile stalk composed of two subunits POLR3H/RPC8 and CRCP/RPC9, protruding from the core and functioning primarily in transcription initiation; and additional subunits homologous to general transcription factors of the RNA polymerase II machinery, POLR3C/RPC3-POLR3F/RPC6-POLR3G/RPC7 heterotrimer required for transcription initiation and POLR3D/RPC4-POLR3E/RPC5 heterodimer involved in both transcription initiation and termination.

It is found in the nucleus. The protein localises to the nucleolus. Its function is as follows. DNA-dependent RNA polymerase catalyzes the transcription of DNA into RNA using the four ribonucleoside triphosphates as substrates. Common component of RNA polymerases I, II and III which synthesize ribosomal RNA precursors, mRNA precursors and many functional non-coding RNAs, and small RNAs, such as 5S rRNA and tRNAs, respectively. The chain is DNA-directed RNA polymerases I, II, and III subunit RPABC3 (POLR2H) from Bos taurus (Bovine).